The sequence spans 199 residues: Chaperone protein TorD (199 aa).

It belongs to the TorD/DmsD family. TorD subfamily.

It is found in the cytoplasm. Its function is as follows. Involved in the biogenesis of TorA. Acts on TorA before the insertion of the molybdenum cofactor and, as a result, probably favors a conformation of the apoenzyme that is competent for acquiring the cofactor. The chain is Chaperone protein TorD from Escherichia coli O45:K1 (strain S88 / ExPEC).